The chain runs to 116 residues: Large ribosomal subunit protein bL19 (116 aa).

It belongs to the bacterial ribosomal protein bL19 family.

Functionally, this protein is located at the 30S-50S ribosomal subunit interface and may play a role in the structure and function of the aminoacyl-tRNA binding site. The protein is Large ribosomal subunit protein bL19 of Blochmanniella pennsylvanica (strain BPEN).